The chain runs to 250 residues: MAISSERVEELLRTFRESLKAKGFEIYPFKVGWYNAVLTAAHHLQYPADTLAVLVISTPAMFECAFLPFLQSQSCESLRDPIDQCTAHTLSACISLCFANQFVDVSYDYEMLPSRKPKFLAQTAAHVSGAAYYYQTSDIHNPPWGEKKMFGVCVHPQLGGWFAIRALLVFRDVQAGAGFQQRDPADCVCTQEERIRLLESFNLRWRDWSYRDIVPAEDRYSDQQKQYFITPPGQRRALLRQWGYLTDTQS.

Substrate-binding positions include Asp-108, 119–122 (FLAQ), 133–135 (YYQ), Cys-153, and Ile-164.

The protein belongs to the MMACHC family. As to quaternary structure, monomer in the absence of bound substrate. Homodimer; dimerization is triggered by binding to FMN or adenosylcobalamin. Heterodimer with MMADHC. FAD is required as a cofactor. Requires FMN as cofactor.

It is found in the cytoplasm. The protein resides in the cytosol. It catalyses the reaction 2 cob(II)alamin-[cyanocobalamin reductase] + 2 hydrogen cyanide + NADP(+) = 2 cyanocob(III)alamin + 2 apo-[cyanocobalamin reductase] + NADPH + H(+). It carries out the reaction apo-[alkylcobalamin reductase] + an R-cob(III)alamin + glutathione = cob(I)alamin-[alkylcobalamin reductase] + an S-substituted glutathione + H(+). The enzyme catalyses apo-[alkylcobalamin reductase] + methylcob(III)alamin + glutathione = S-methyl glutathione + cob(I)alamin-[alkylcobalamin reductase] + H(+). The catalysed reaction is apo-[alkylcobalamin reductase] + adenosylcob(III)alamin + glutathione = S-adenosylglutathione + cob(I)alamin-[alkylcobalamin reductase] + H(+). Cobalamin (vitamin B12) cytosolic chaperone that catalyzes the reductive decyanation of cyanocob(III)alamin (cyanocobalamin, CNCbl) to yield cob(II)alamin and cyanide, using FAD or FMN as cofactors and NADPH as cosubstrate. Cyanocobalamin constitutes the inactive form of vitamin B12 introduced from the diet, and is converted into the active cofactors methylcobalamin (MeCbl) involved in methionine biosynthesis, and 5'-deoxyadenosylcobalamin (AdoCbl) involved in the TCA cycle. Forms a complex with the lysosomal transporter ABCD4 and its chaperone LMBRD1, to transport cobalamin across the lysosomal membrane into the cytosol. The processing of cobalamin in the cytosol occurs in a multiprotein complex composed of at least MMACHC, MMADHC, MTRR (methionine synthase reductase) and MTR (methionine synthase) which may contribute to shuttle safely and efficiently cobalamin towards MTR in order to produce methionine. Also acts as a glutathione transferase by catalyzing the dealkylation of the alkylcob(III)alamins MeCbl and AdoCbl, using the thiolate of glutathione for nucleophilic displacement to generate cob(I)alamin and the corresponding glutathione thioether. The conversion of incoming MeCbl or AdoCbl into a common intermediate cob(I)alamin is necessary to meet the cellular needs for both cofactors. Cysteine and homocysteine cannot substitute for glutathione in this reaction. The chain is Cyanocobalamin reductase / alkylcobalamin dealkylase (mmachc) from Danio rerio (Zebrafish).